The sequence spans 1026 residues: Vacuolar protein sorting-associated protein 18 homolog (1026 aa).

Residues 858-896 adopt a coiled-coil conformation; that stretch reads IVDFLKRNKQRLEKLERSMKEATEIASEIRDKQEKLKNR. The RING-type; degenerate zinc finger occupies 906–932; the sequence is CSHCARPISGRAFNVHSCRHFFHRECL.

As to quaternary structure, probable core component of at least two putative endosomal tethering complexes, the homotypic fusion and vacuole protein sorting (HOPS) complex and the class C core vacuole/endosome tethering (CORVET) complex. Their common core is composed of the class C Vps proteins vps-11, vps-16 and vps-18, which in HOPS further associates with vps-33.1, vps-39 and vps-41 and in CORVET with vps-8 and vps-33.2. In hermaphrodites, expressed in coelomocytes and gonadal sheath cells.

The protein resides in the cytoplasm. Its subcellular location is the late endosome membrane. The protein localises to the lysosome membrane. It localises to the early endosome. It is found in the cytoplasmic vesicle. The protein resides in the autophagosome. Its subcellular location is the clathrin-coated vesicle. Its function is as follows. Plays a role in vesicle-mediated protein trafficking to lysosomal compartments including the endocytic membrane transport and autophagic pathways. Believed to act as a core component of the putative HOPS and CORVET endosomal tethering complexes which are proposed to be involved in the rab-5-to-rab-7 endosome conversion probably implicating sand-1, and via binding SNAREs and SNARE complexes to mediate tethering and docking events during SNARE-mediated membrane fusion. The HOPS complex is proposed to be recruited to rab-7 on the late endosomal membrane and to regulate late endocytic, phagocytic and autophagic traffic towards lysosomes. Within the HOPS complex, contributes to the normal development of gut granules in intestinal cells of the embryo, and also promotes the trafficking of embryonic intestinal gut granules away from lysosomes. The CORVET complex is proposed to function as a rab-5 effector to mediate early endosome fusion probably in specific endosome subpopulations. Required for fusion of endosomes and autophagosomes with lysosomes. Plays a role in the degradation of apoptotic cells during programmed cell death. This Caenorhabditis elegans protein is Vacuolar protein sorting-associated protein 18 homolog.